A 197-amino-acid chain; its full sequence is Phosphoheptose isomerase (197 aa).

Positions 36–197 (MVNALLNEGK…IDSQLFGSEE (162 aa)) constitute an SIS domain. 51-53 (NGG) contacts substrate. Zn(2+) contacts are provided by H60 and E64. Substrate-binding positions include E64, 93–94 (ND), 119–121 (STS), S124, and Q174. 2 residues coordinate Zn(2+): Q174 and H182.

The protein belongs to the SIS family. GmhA subfamily. Homotetramer. The cofactor is Zn(2+).

Its subcellular location is the cytoplasm. The catalysed reaction is 2 D-sedoheptulose 7-phosphate = D-glycero-alpha-D-manno-heptose 7-phosphate + D-glycero-beta-D-manno-heptose 7-phosphate. The protein operates within carbohydrate biosynthesis; D-glycero-D-manno-heptose 7-phosphate biosynthesis; D-glycero-alpha-D-manno-heptose 7-phosphate and D-glycero-beta-D-manno-heptose 7-phosphate from sedoheptulose 7-phosphate: step 1/1. In terms of biological role, catalyzes the isomerization of sedoheptulose 7-phosphate in D-glycero-D-manno-heptose 7-phosphate. The sequence is that of Phosphoheptose isomerase from Pseudomonas fluorescens (strain SBW25).